The sequence spans 209 residues: Mitochondrial import inner membrane translocase subunit Tim23 (209 aa).

Helical transmembrane passes span 73-93 (FELAFFTIGGCCMTGAAFGAM), 125-145 (ALWANTLGSLALLYSAFGVII), and 181-197 (GLTGLTLTSLYALYNNW).

The protein belongs to the Tim17/Tim22/Tim23 family. As to quaternary structure, component of the TIM23 complex at least composed of TIMM23, TIMM17 (TIMM17A or TIMM17B) and TIMM50; within this complex, directly interacts with TIMM50. The complex interacts with the TIMM44 component of the PAM complex and with DNAJC15. Upon mitochondrial depolarization, interacts with PINK1; the interaction is required for PINK1 accumulation at the outer mitochondrial membrane, kinase activation by autophosphorylation and PRKN recruitement to mitochondria.

The protein localises to the mitochondrion inner membrane. In terms of biological role, essential component of the TIM23 complex, a complex that mediates the translocation of transit peptide-containing proteins across the mitochondrial inner membrane. Has a role in the activation of stress-induced mitophagy by protecting PINK1 from OMA1-mediated degradation and facilitating its accumulation at the outer mitochondrial membrane in response to depolarization. This Homo sapiens (Human) protein is Mitochondrial import inner membrane translocase subunit Tim23 (TIMM23).